The chain runs to 234 residues: uncharacterized protein (234 aa).

Over residues Met-1–Ser-12 the composition is skewed to low complexity. The disordered stretch occupies residues Met-1 to Arg-184. 2 stretches are compositionally biased toward polar residues: residues Thr-21–Ser-40 and Lys-52–Pro-64. Residues Lys-66–Ser-77 show a composition bias toward low complexity. Positions Gly-105 to Ser-120 are enriched in polar residues. Over residues Leu-152 to Ser-167 the composition is skewed to basic and acidic residues.

Interacts with RLK902. Expressed in stems, rosette leaves and roots and weakly in inflorescences.

This is an uncharacterized protein from Arabidopsis thaliana (Mouse-ear cress).